The chain runs to 916 residues: Oxoglutarate dehydrogenase (916 aa).

The protein belongs to the alpha-ketoglutarate dehydrogenase family. In terms of assembly, homodimer. Part of the 2-oxoglutarate dehydrogenase (OGDH) complex composed of E1 (2-oxoglutarate dehydrogenase), E2 (dihydrolipoamide succinyltransferase) and E3 (dihydrolipoamide dehydrogenase); the complex contains multiple copies of the three enzymatic components (E1, E2 and E3). Thiamine diphosphate serves as cofactor.

It catalyses the reaction N(6)-[(R)-lipoyl]-L-lysyl-[protein] + 2-oxoglutarate + H(+) = N(6)-[(R)-S(8)-succinyldihydrolipoyl]-L-lysyl-[protein] + CO2. E1 component of the 2-oxoglutarate dehydrogenase (OGDH) complex which catalyzes the decarboxylation of 2-oxoglutarate, the first step in the conversion of 2-oxoglutarate to succinyl-CoA and CO(2). This chain is Oxoglutarate dehydrogenase (sucA), found in Buchnera aphidicola subsp. Baizongia pistaciae (strain Bp).